Consider the following 313-residue polypeptide: Protein PALE CRESS, chloroplastic (313 aa).

The N-terminal 22 residues, 1–22 (MAATSLVLTCASPLFSSPRVIS), are a transit peptide targeting the chloroplast.

As to expression, expressed in green tissues, including leaves. Accumulates in chloroplasts of mature stomatal guard cells.

Its subcellular location is the plastid. The protein resides in the chloroplast. The protein localises to the chromoplast. It is found in the etioplast. It localises to the amyloplast. Its function is as follows. Required for the differentiation of chloroplast from proplastids or etioplasts, probably by modulating some chloroplast-encoded genes expression and mRNA maturation. Involved in leaf-cells differentiation. This Arabidopsis thaliana (Mouse-ear cress) protein is Protein PALE CRESS, chloroplastic (PAC).